Reading from the N-terminus, the 625-residue chain is Chaperone protein DnaK (625 aa).

Residue Thr-197 is modified to Phosphothreonine; by autocatalysis. Residues 598–625 are disordered; that stretch reads MYKKDDNASGEQSGGKKKDDDVIDAEVE.

It belongs to the heat shock protein 70 family.

Acts as a chaperone. This Campylobacter curvus (strain 525.92) protein is Chaperone protein DnaK.